Here is a 263-residue protein sequence, read N- to C-terminus: Chymotrypsinogen B2 (263 aa).

An N-terminal signal peptide occupies residues 1-18; sequence MAFLWLLSCWALLGTTFG. 5 cysteine pairs are disulfide-bonded: C19–C140, C60–C76, C154–C219, C186–C200, and C209–C238. The Peptidase S1 domain occupies 34–261; that stretch reads IVNGEDAVPG…LIPWVQKILA (228 aa). Catalysis depends on charge relay system residues H75 and D120. The active-site Charge relay system is S213.

Belongs to the peptidase S1 family.

Its subcellular location is the secreted. It is found in the extracellular space. It carries out the reaction Preferential cleavage: Tyr-|-Xaa, Trp-|-Xaa, Phe-|-Xaa, Leu-|-Xaa.. This chain is Chymotrypsinogen B2 (CTRB2), found in Homo sapiens (Human).